The chain runs to 236 residues: Peroxisomal coenzyme A diphosphatase NUDT7 (236 aa).

K20 is subject to N6-succinyllysine. The 133-residue stretch at 37–169 folds into the Nudix hydrolase domain; the sequence is SNKFSVLVPL…QKQITQSGRD (133 aa). The Nudix box signature appears at 77–98; the sequence is KRDPVDTDDTATALREAQEEVG. E92 and E96 together coordinate Mg(2+). Position 178 is an N6-succinyllysine (K178). The short motif at 234–236 is the Microbody targeting signal element; that stretch reads SKL.

This sequence belongs to the Nudix hydrolase family. PCD1 subfamily. As to quaternary structure, monomer. Mn(2+) is required as a cofactor. Requires Mg(2+) as cofactor. As to expression, highly expressed in liver, brown adipose tissue and heart. Expressed at intermediate level in lung and kidney and at low level in brain. Expressed in liver, brown adipose tissue and heart at 20 times lower levels than isoform 1.

It is found in the peroxisome. The catalysed reaction is hexanoyl-CoA + H2O = hexanoyl-4'-phosphopantetheine + adenosine 3',5'-bisphosphate + 2 H(+). The enzyme catalyses octanoyl-CoA + H2O = S-octanoyl-4'-phosphopantetheine + adenosine 3',5'-bisphosphate + 2 H(+). It carries out the reaction butanoyl-CoA + H2O = S-butanoyl-4'-phosphopantetheine + adenosine 3',5'-bisphosphate + 2 H(+). It catalyses the reaction decanoyl-CoA + H2O = decanoyl-4'-phosphopantetheine + adenosine 3',5'-bisphosphate + 2 H(+). The catalysed reaction is dodecanoyl-CoA + H2O = S-dodecanoyl-4'-phosphopantetheine + adenosine 3',5'-bisphosphate + 2 H(+). The enzyme catalyses tetradecanoyl-CoA + H2O = tetradecanoyl-4'-phosphopantetheine + adenosine 3',5'-bisphosphate + 2 H(+). It carries out the reaction choloyl-CoA + H2O = S-choloyl-4'-phosphopantetheine + adenosine 3',5'-bisphosphate + 2 H(+). It catalyses the reaction 3alpha,7alpha,12alpha-trihydroxy-5beta-cholestan-26-oyl-CoA + H2O = 3alpha,7alpha,12alpha-trihydroxy-5beta-cholestan-26-oyl-4'-phosphopantetheine + adenosine 3',5'-bisphosphate + 2 H(+). The catalysed reaction is acetyl-CoA + H2O = S-acetyl-4'-phosphopantetheine + adenosine 3',5'-bisphosphate + 2 H(+). The enzyme catalyses CoA + H2O = (R)-4'-phosphopantetheine + adenosine 3',5'-bisphosphate + 2 H(+). It carries out the reaction propanoyl-CoA + H2O = propanoyl-4'-phosphopantetheine + adenosine 3',5'-bisphosphate + 2 H(+). It catalyses the reaction malonyl-CoA + H2O = malonyl-4'-phosphopantetheine + adenosine 3',5'-bisphosphate + 2 H(+). The catalysed reaction is succinyl-CoA + H2O = succinyl-4'-phosphopantetheine + adenosine 3',5'-bisphosphate + 2 H(+). The enzyme catalyses a 5'-end CoA-ribonucleoside in mRNA + H2O = a 5'-end phospho-adenosine-phospho-ribonucleoside in mRNA + (R)-4'-phosphopantetheine + 2 H(+). Inhibited by fluoride. Fatty acyl-coenzyme A (CoA) diphosphatase that hydrolyzes fatty acyl-CoA to yield acyl-4'-phosphopantetheine and adenosine 3',5'-bisphosphate. Cleaves CoA, CoA esters and oxidized CoA with similar efficiencies. Preferentially hydrolyzes medium-chain acyl-CoAs and bile acid-CoAs. Has no activity toward NDP-sugars, CDP-alcohols, (deoxy)nucleoside 5'-triphosphates, nucleoside 5'-di or monophosphates, diadenosine polyphosphates, NAD, NADH, NADP, NADPH or thymidine-5'-monophospho-p-nitrophenyl ester. May be required to eliminate oxidized CoA from peroxisomes, or regulate CoA and acyl-CoA levels in this organelle in response to metabolic demand. Does not play a role in U8 snoRNA decapping activity. Binds U8 snoRNA. Exhibits decapping activity towards dpCoA-capped RNAs in vitro. The chain is Peroxisomal coenzyme A diphosphatase NUDT7 from Mus musculus (Mouse).